The primary structure comprises 458 residues: UDP-N-acetylglucosamine 1-carboxyvinyltransferase (458 aa).

34–35 provides a ligand contact to phosphoenolpyruvate; the sequence is KN. Arg104 contributes to the UDP-N-acetyl-alpha-D-glucosamine binding site. The active-site Proton donor is Cys128. Cys128 carries the post-translational modification 2-(S-cysteinyl)pyruvic acid O-phosphothioketal. UDP-N-acetyl-alpha-D-glucosamine-binding residues include Asp319 and Ile341.

This sequence belongs to the EPSP synthase family. MurA subfamily.

The protein resides in the cytoplasm. It catalyses the reaction phosphoenolpyruvate + UDP-N-acetyl-alpha-D-glucosamine = UDP-N-acetyl-3-O-(1-carboxyvinyl)-alpha-D-glucosamine + phosphate. The protein operates within cell wall biogenesis; peptidoglycan biosynthesis. Its function is as follows. Cell wall formation. Adds enolpyruvyl to UDP-N-acetylglucosamine. The polypeptide is UDP-N-acetylglucosamine 1-carboxyvinyltransferase (Prochlorococcus marinus (strain MIT 9515)).